Reading from the N-terminus, the 309-residue chain is Probable manganese-dependent inorganic pyrophosphatase (309 aa).

Mn(2+)-binding residues include His9, Asp13, Asp15, Asp75, His97, and Asp149.

It belongs to the PPase class C family. Mn(2+) serves as cofactor.

It is found in the cytoplasm. The enzyme catalyses diphosphate + H2O = 2 phosphate + H(+). The chain is Probable manganese-dependent inorganic pyrophosphatase from Bacillus cereus (strain G9842).